The following is a 434-amino-acid chain: Protein translocase subunit SecY (434 aa).

10 helical membrane-spanning segments follow: residues 19-39 (LFTL…IPGI), 73-93 (IFML…LLVY), 117-137 (YLTI…AKGI), 148-168 (YIFV…WFGE), 179-199 (TSLI…FNLF), 209-229 (VNPV…ILII), 264-284 (VLPV…LSGF), 300-320 (PNGF…TYFY), 362-382 (FSGS…QNIF), and 391-411 (IMGG…LIHI).

The protein belongs to the SecY/SEC61-alpha family. In terms of assembly, component of the Sec protein translocase complex. Heterotrimer consisting of SecY, SecE and SecG subunits. The heterotrimers can form oligomers, although 1 heterotrimer is thought to be able to translocate proteins. Interacts with the ribosome. Interacts with SecDF, and other proteins may be involved. Interacts with SecA.

Its subcellular location is the cell inner membrane. Functionally, the central subunit of the protein translocation channel SecYEG. Consists of two halves formed by TMs 1-5 and 6-10. These two domains form a lateral gate at the front which open onto the bilayer between TMs 2 and 7, and are clamped together by SecE at the back. The channel is closed by both a pore ring composed of hydrophobic SecY resides and a short helix (helix 2A) on the extracellular side of the membrane which forms a plug. The plug probably moves laterally to allow the channel to open. The ring and the pore may move independently. This is Protein translocase subunit SecY from Borreliella burgdorferi (strain ATCC 35210 / DSM 4680 / CIP 102532 / B31) (Borrelia burgdorferi).